Reading from the N-terminus, the 276-residue chain is Glyoxal reductase (276 aa).

Tyr54 serves as the catalytic Proton donor. A substrate-binding site is contributed by His112. 190–242 (SPLMQGQLLDNEVLTQIAEKHNKSVAQVILRWDLQHGVVTIPKSIKEHRIIEN) contributes to the NADP(+) binding site.

This sequence belongs to the aldo/keto reductase family.

It carries out the reaction (S)-lactaldehyde + NADP(+) = methylglyoxal + NADPH + H(+). Functionally, reduces glyoxal and methylglyoxal (2-oxopropanal). Is not involved in the vitamin B6 biosynthesis. This is Glyoxal reductase (yvgN) from Bacillus subtilis (strain 168).